We begin with the raw amino-acid sequence, 1653 residues long: Clathrin heavy chain (1653 aa).

The tract at residues 1 to 483 (MSDLPIEFTE…FDTTLALACY (483 aa)) is globular terminal domain. WD40-like repeat stretches follow at residues 23-66 (FLDF…KNMG), 67-107 (GDSA…LDEP), 108-152 (VIFW…ANLN), 153-198 (NTQI…QAID), 199-263 (GHVA…PDAT), 264-307 (NDFP…ITAE), and 308-336 (SVFT…VEIS). Positions 453–469 (EKWLKEDKLECSEELGD) are binding site for the uncoating ATPase, involved in lattice disassembly. The flexible linker stretch occupies residues 484–527 (LRAGAHAKVISCLAELQQFEKIIPYCQKVGYQPNFLVLISSLIR). A heavy chain arm region spans residues 528-1653 (SSPDRASEFA…SAMNVQPTGF (1126 aa)). CHCR repeat units lie at residues 543-689 (NPET…QTVV), 692-834 (ATKF…DEAF), 839-978 (LQSV…QLID), 985-1130 (IPEL…IPDA), 1134-1275 (YIKA…FKLA), 1280-1426 (LNLI…SLLV), and 1429-1572 (LTSL…REGF). Lys1107 is covalently cross-linked (Glycyl lysine isopeptide (Lys-Gly) (interchain with G-Cter in ubiquitin)). The interval 1219–1528 (AARLCYSAVS…LLYRRNKKWA (310 aa)) is involved in binding clathrin light chain.

Belongs to the clathrin heavy chain family. In terms of assembly, clathrin triskelions, composed of 3 heavy chains and 3 light chains, are the basic subunits of the clathrin coat. Interacts with the auxilin-like clathrin uncoating factor SWA2. Interacts with INP53.

Its subcellular location is the cytoplasmic vesicle membrane. The protein localises to the membrane. It localises to the coated pit. In terms of biological role, clathrin is the major protein of the polyhedral coat of coated pits and vesicles. In yeast, it is involved in the retention of proteins in an intracellular membrane compartment, presumably the trans-Golgi. This chain is Clathrin heavy chain (CHC1), found in Saccharomyces cerevisiae (strain ATCC 204508 / S288c) (Baker's yeast).